The following is a 111-amino-acid chain: Wound-induced proteinase inhibitor 1 (111 aa).

A signal peptide spans 1–23 (MEAKFAHIILFFLLAFSFETLMA). Positions 24–36 (RKESDGPEVIKLL) are excised as a propeptide.

Belongs to the protease inhibitor I13 (potato type I serine protease inhibitor) family.

The protein resides in the secreted. The chain is Wound-induced proteinase inhibitor 1 from Solanum peruvianum (Peruvian tomato).